The sequence spans 110 residues: Ubiquitin-related modifier 1 (110 aa).

Position 110 is a 1-thioglycine (G110). G110 participates in a covalent cross-link: Glycyl lysine isopeptide (Gly-Lys) (interchain with K-? in acceptor proteins).

The protein belongs to the URM1 family. Homodimer; homodimerization may provide an autoprotection to the highly active C-terminal residue before attacking its substrates. Forms a conjugate with the target protein AHP1. C-terminal thiocarboxylation occurs in 2 steps, it is first acyl-adenylated (-COAMP) via the hesA/moeB/thiF part of UBA4, then thiocarboxylated (-COSH) via the rhodanese domain of UBA4.

It localises to the cytoplasm. Its pathway is tRNA modification; 5-methoxycarbonylmethyl-2-thiouridine-tRNA biosynthesis. Functionally, acts as a sulfur carrier required for 2-thiolation of mcm(5)S(2)U at tRNA wobble positions of cytosolic tRNA(Lys), tRNA(Glu) and tRNA(Gln). Serves as sulfur donor in tRNA 2-thiolation reaction by being thiocarboxylated (-COSH) at its C-terminus by the MOCS3 homolog UBA4. The sulfur is then transferred to tRNA to form 2-thiolation of mcm(5)S(2)U. Prior mcm(5) tRNA modification by the elongator complex is required for 2-thiolation. Also acts as a ubiquitin-like protein (UBL) that is covalently conjugated via an isopeptide bond to lysine residues of target proteins such as AHP1. Conjugation does not depend on the canonical cascade of E2 ubiquitin-conjugating enzymes and/or E3 ligases. The conjugation reaction requires a thiocarboxylated C-terminus of URM1 and a peroxidatic cysteine in the target protein, as the sulfur atom of the URM1 thiocarboxyl group is transferred to redox-active cysteine residues in the target protein. Oxidative stress specifically induces the formation of UBL-protein conjugates. Covalent modification with URM1 promotes the phase separation of a wide range of proteins into condensates like stress granules. In Chaetomium thermophilum (strain DSM 1495 / CBS 144.50 / IMI 039719) (Thermochaetoides thermophila), this protein is Ubiquitin-related modifier 1.